The sequence spans 364 residues: Mannose-1-phosphate guanyltransferase (364 aa).

The protein belongs to the transferase hexapeptide repeat family.

Its subcellular location is the cytoplasm. The enzyme catalyses alpha-D-mannose 1-phosphate + GTP + H(+) = GDP-alpha-D-mannose + diphosphate. The protein operates within nucleotide-sugar biosynthesis; GDP-alpha-D-mannose biosynthesis; GDP-alpha-D-mannose from alpha-D-mannose 1-phosphate (GTP route): step 1/1. Involved in cell wall synthesis where it is required for glycosylation. Involved in cell cycle progression through cell-size checkpoint. The chain is Mannose-1-phosphate guanyltransferase (MPG1) from Pichia angusta (Yeast).